Reading from the N-terminus, the 436-residue chain is Probable D-serine dehydratase (436 aa).

Lysine 111 carries the N6-(pyridoxal phosphate)lysine modification.

It belongs to the serine/threonine dehydratase family. DsdA subfamily. Requires pyridoxal 5'-phosphate as cofactor.

The catalysed reaction is D-serine = pyruvate + NH4(+). This is Probable D-serine dehydratase from Lactiplantibacillus plantarum (strain ATCC BAA-793 / NCIMB 8826 / WCFS1) (Lactobacillus plantarum).